Reading from the N-terminus, the 163-residue chain is HTH-type transcriptional regulator IscR (163 aa).

Positions 2 to 131 constitute an HTH rrf2-type domain; the sequence is RLTSKGRYAV…NNITLGELVN (130 aa). A DNA-binding region (H-T-H motif) is located at residues 28-51; the sequence is LADISERQGISLSYLEQLFSRLRK. [2Fe-2S] cluster is bound by residues Cys92, Cys98, and Cys104.

[2Fe-2S] cluster is required as a cofactor.

Functionally, regulates the transcription of several operons and genes involved in the biogenesis of Fe-S clusters and Fe-S-containing proteins. In Klebsiella pneumoniae (strain 342), this protein is HTH-type transcriptional regulator IscR.